A 394-amino-acid polypeptide reads, in one-letter code: MSKEKFERVKPHVNVGTIGHVDHGKTTLTAAICTTLAKVYGGAARDFASIDNAPEERERGITISTSHVEYDTPARHYAHVDCPGHADYVKNMITGAAQMDGGILVVAATDGPMPQTREHILLGRQVGIPYIIVFMNKCDMVDDEELLELVEMEVRELLSEYDFPGDDLPVIQGSALGALNGEEQWEAKIIELAEALDTYIPEPERAIDLPFLMPIEDVFSIQGRGTVVTGRIERGILKVGDEVAIVGIKDTTTTTCTGVEMFRKLLDEGRAGENVGALLRGTKRDEVERGQVLAKPGSITPHTKFESEVYVLSKDEGGRHTPFFKGYRPQFYFRTTDVTGDISLPEGVEMVMPGDNIQMVVELISPIAMDEGLRFAIREGGRTVGAGVVAKIFE.

In terms of domain architecture, tr-type G spans 10–204 (KPHVNVGTIG…ALDTYIPEPE (195 aa)). The tract at residues 19-26 (GHVDHGKT) is G1. Position 19 to 26 (19 to 26 (GHVDHGKT)) interacts with GTP. T26 is a Mg(2+) binding site. A G2 region spans residues 60–64 (GITIS). The interval 81–84 (DCPG) is G3. Residues 81-85 (DCPGH) and 136-139 (NKCD) each bind GTP. Residues 136–139 (NKCD) are G4. Residues 174-176 (SAL) are G5.

The protein belongs to the TRAFAC class translation factor GTPase superfamily. Classic translation factor GTPase family. EF-Tu/EF-1A subfamily. Monomer.

The protein localises to the cytoplasm. The enzyme catalyses GTP + H2O = GDP + phosphate + H(+). Its function is as follows. GTP hydrolase that promotes the GTP-dependent binding of aminoacyl-tRNA to the A-site of ribosomes during protein biosynthesis. This is Elongation factor Tu 1 from Vibrio vulnificus (strain CMCP6).